A 457-amino-acid polypeptide reads, in one-letter code: ATP synthase subunit beta (457 aa).

An ATP-binding site is contributed by Gly147–Thr154.

It belongs to the ATPase alpha/beta chains family. As to quaternary structure, F-type ATPases have 2 components, CF(1) - the catalytic core - and CF(0) - the membrane proton channel. CF(1) has five subunits: alpha(3), beta(3), gamma(1), delta(1), epsilon(1). CF(0) has three main subunits: a(1), b(2) and c(9-12). The alpha and beta chains form an alternating ring which encloses part of the gamma chain. CF(1) is attached to CF(0) by a central stalk formed by the gamma and epsilon chains, while a peripheral stalk is formed by the delta and b chains.

It localises to the cell inner membrane. The catalysed reaction is ATP + H2O + 4 H(+)(in) = ADP + phosphate + 5 H(+)(out). Its function is as follows. Produces ATP from ADP in the presence of a proton gradient across the membrane. The catalytic sites are hosted primarily by the beta subunits. This Haemophilus influenzae (strain PittGG) protein is ATP synthase subunit beta.